Reading from the N-terminus, the 503-residue chain is Probable cytosol aminopeptidase (503 aa).

Positions 274 and 279 each coordinate Mn(2+). The active site involves lysine 286. Positions 297, 356, and 358 each coordinate Mn(2+). Arginine 360 is an active-site residue.

This sequence belongs to the peptidase M17 family. Mn(2+) serves as cofactor.

The protein resides in the cytoplasm. It catalyses the reaction Release of an N-terminal amino acid, Xaa-|-Yaa-, in which Xaa is preferably Leu, but may be other amino acids including Pro although not Arg or Lys, and Yaa may be Pro. Amino acid amides and methyl esters are also readily hydrolyzed, but rates on arylamides are exceedingly low.. It carries out the reaction Release of an N-terminal amino acid, preferentially leucine, but not glutamic or aspartic acids.. Its function is as follows. Presumably involved in the processing and regular turnover of intracellular proteins. Catalyzes the removal of unsubstituted N-terminal amino acids from various peptides. The chain is Probable cytosol aminopeptidase from Burkholderia pseudomallei (strain 1106a).